The following is a 193-amino-acid chain: ATP-dependent Clp protease proteolytic subunit (193 aa).

Residue serine 98 is the Nucleophile of the active site. The active site involves histidine 123.

Belongs to the peptidase S14 family. Fourteen ClpP subunits assemble into 2 heptameric rings which stack back to back to give a disk-like structure with a central cavity, resembling the structure of eukaryotic proteasomes.

It localises to the cytoplasm. The enzyme catalyses Hydrolysis of proteins to small peptides in the presence of ATP and magnesium. alpha-casein is the usual test substrate. In the absence of ATP, only oligopeptides shorter than five residues are hydrolyzed (such as succinyl-Leu-Tyr-|-NHMec, and Leu-Tyr-Leu-|-Tyr-Trp, in which cleavage of the -Tyr-|-Leu- and -Tyr-|-Trp bonds also occurs).. Its function is as follows. Cleaves peptides in various proteins in a process that requires ATP hydrolysis. Has a chymotrypsin-like activity. Plays a major role in the degradation of misfolded proteins. The sequence is that of ATP-dependent Clp protease proteolytic subunit from Pasteurella multocida (strain Pm70).